A 165-amino-acid chain; its full sequence is Phosphopantetheine adenylyltransferase (165 aa).

Ser-10 serves as a coordination point for substrate. Residues 10–11 (SF) and His-18 contribute to the ATP site. Substrate is bound by residues Lys-42, Thr-79, and Arg-93. ATP-binding positions include 94 to 96 (GLR), Glu-104, and 129 to 135 (VRPITAT).

This sequence belongs to the bacterial CoaD family. In terms of assembly, homohexamer. Mg(2+) serves as cofactor.

It localises to the cytoplasm. The enzyme catalyses (R)-4'-phosphopantetheine + ATP + H(+) = 3'-dephospho-CoA + diphosphate. It functions in the pathway cofactor biosynthesis; coenzyme A biosynthesis; CoA from (R)-pantothenate: step 4/5. In terms of biological role, reversibly transfers an adenylyl group from ATP to 4'-phosphopantetheine, yielding dephospho-CoA (dPCoA) and pyrophosphate. This is Phosphopantetheine adenylyltransferase from Rhodopseudomonas palustris (strain BisB5).